A 636-amino-acid chain; its full sequence is Nucleolar protein 9 (636 aa).

Positions 1 to 59 (MGQGPRSPHKVGRRFPAGGKRGRGAKGSGRPLPGRKRQPWPPPDGRSEPAPDSHPHLSP) are disordered. Residue serine 7 is modified to Phosphoserine. A compositionally biased stretch (basic and acidic residues) spans 45-57 (GRSEPAPDSHPHL). 2 Pumilio repeats span residues 92-123 (EVET…KPLC) and 189-223 (EVCD…ESER). Positions 222–241 (ERARPRGSQSSEAQKTPAQE) are disordered. Positions 228–238 (GSQSSEAQKTP) are enriched in polar residues. Pumilio repeat units lie at residues 313–348 (SVDG…QSLF), 351–386 (HLQG…SPVF), 509–544 (LTGP…RRRV), and 547–581 (NLKG…KEIA).

This sequence belongs to the NOP9 family.

The protein is Nucleolar protein 9 (NOP9) of Homo sapiens (Human).